The following is a 435-amino-acid chain: AP-2 complex subunit mu (435 aa).

The residue at position 45 (S45) is a Phosphoserine. T156 carries the post-translational modification Phosphothreonine. The MHD domain occupies 170–434 (RNELFLDVLE…IGRSGIYETR (265 aa)). K341, K345, and K354 together coordinate a 1,2-diacyl-sn-glycero-3-phospho-(1D-myo-inositol-3,4,5-trisphosphate).

The protein belongs to the adaptor complexes medium subunit family. Adaptor protein complex 2 (AP-2) is a heterotetramer composed of two large adaptins (alpha-type subunit AP2A1 or AP2A2 and beta-type subunit AP2B1), a medium adaptin (mu-type subunit AP2M1) and a small adaptin (sigma-type subunit AP2S1). Interacts with ATP6V1H and MEGF10. Interacts with EGFR. Interacts with PIP5K1C; tyrosine phosphorylation of PIP5K1C weakens the interaction. Interacts with KIAA0319; required for clathrin-mediated endocytosis of KIAA0319. Interacts with DVL2 (via DEP domain). Interacts with KCNQ1; mediates estrogen-induced internalization via clathrin-coated vesicles. Together with AP2A1 or AP2A2 and AP2B1, it interacts with ADAM10; this interaction facilitates ADAM10 endocytosis from the plasma membrane during long-term potentiation in hippocampal neurons. Probably interacts with ACE2 (via endocytic sorting signal motif); the interaction is inhibited by ACE2 phosphorylation. Interacts with RALBP1; the interaction is direct. Interacts with TMEM106B (via N-terminus). Post-translationally, phosphorylation at Thr-156 increases the affinity of the AP-2 complex for cargo membrane proteins during the initial stages of endocytosis.

It localises to the cell membrane. The protein localises to the membrane. It is found in the coated pit. Its function is as follows. Component of the adaptor protein complex 2 (AP-2). Adaptor protein complexes function in protein transport via transport vesicles in different membrane traffic pathways. Adaptor protein complexes are vesicle coat components and appear to be involved in cargo selection and vesicle formation. AP-2 is involved in clathrin-dependent endocytosis in which cargo proteins are incorporated into vesicles surrounded by clathrin (clathrin-coated vesicles, CCVs) which are destined for fusion with the early endosome. The clathrin lattice serves as a mechanical scaffold but is itself unable to bind directly to membrane components. Clathrin-associated adaptor protein (AP) complexes which can bind directly to both the clathrin lattice and to the lipid and protein components of membranes are considered to be the major clathrin adaptors contributing the CCV formation. AP-2 also serves as a cargo receptor to selectively sort the membrane proteins involved in receptor-mediated endocytosis. AP-2 seems to play a role in the recycling of synaptic vesicle membranes from the presynaptic surface. AP-2 recognizes Y-X-X-[FILMV] (Y-X-X-Phi) and [ED]-X-X-X-L-[LI] endocytosis signal motifs within the cytosolic tails of transmembrane cargo molecules. AP-2 may also play a role in maintaining normal post-endocytic trafficking through the ARF6-regulated, non-clathrin pathway. During long-term potentiation in hippocampal neurons, AP-2 is responsible for the endocytosis of ADAM10. The AP-2 mu subunit binds to transmembrane cargo proteins; it recognizes the Y-X-X-Phi motifs. The surface region interacting with to the Y-X-X-Phi motif is inaccessible in cytosolic AP-2, but becomes accessible through a conformational change following phosphorylation of AP-2 mu subunit at Thr-156 in membrane-associated AP-2. The membrane-specific phosphorylation event appears to involve assembled clathrin which activates the AP-2 mu kinase AAK1. Plays a role in endocytosis of frizzled family members upon Wnt signaling. This chain is AP-2 complex subunit mu (AP2M1), found in Pongo abelii (Sumatran orangutan).